We begin with the raw amino-acid sequence, 90 residues long: DNA-directed RNA polymerase subunit omega (90 aa).

Belongs to the RNA polymerase subunit omega family. The RNAP catalytic core consists of 2 alpha, 1 beta, 1 beta' and 1 omega subunit. When a sigma factor is associated with the core the holoenzyme is formed, which can initiate transcription.

The catalysed reaction is RNA(n) + a ribonucleoside 5'-triphosphate = RNA(n+1) + diphosphate. Its function is as follows. Promotes RNA polymerase assembly. Latches the N- and C-terminal regions of the beta' subunit thereby facilitating its interaction with the beta and alpha subunits. This is DNA-directed RNA polymerase subunit omega from Streptomyces griseus subsp. griseus (strain JCM 4626 / CBS 651.72 / NBRC 13350 / KCC S-0626 / ISP 5235).